Consider the following 547-residue polypeptide: Chaperonin GroEL (547 aa).

ATP contacts are provided by residues 30–33 (TLGP), Lys51, 87–91 (DGTTT), Gly415, and Asp496. The disordered stretch occupies residues 527-547 (SDKAEPMPMRGGMGGMGGMDF). Gly residues predominate over residues 537-547 (GGMGGMGGMDF).

The protein belongs to the chaperonin (HSP60) family. Forms a cylinder of 14 subunits composed of two heptameric rings stacked back-to-back. Interacts with the co-chaperonin GroES.

The protein localises to the cytoplasm. The catalysed reaction is ATP + H2O + a folded polypeptide = ADP + phosphate + an unfolded polypeptide.. In terms of biological role, together with its co-chaperonin GroES, plays an essential role in assisting protein folding. The GroEL-GroES system forms a nano-cage that allows encapsulation of the non-native substrate proteins and provides a physical environment optimized to promote and accelerate protein folding. The chain is Chaperonin GroEL from Rickettsia rickettsii (strain Sheila Smith).